The following is a 287-amino-acid chain: 2-dehydro-3-deoxyphosphooctonate aldolase (287 aa).

Belongs to the KdsA family.

The protein localises to the cytoplasm. The catalysed reaction is D-arabinose 5-phosphate + phosphoenolpyruvate + H2O = 3-deoxy-alpha-D-manno-2-octulosonate-8-phosphate + phosphate. The protein operates within carbohydrate biosynthesis; 3-deoxy-D-manno-octulosonate biosynthesis; 3-deoxy-D-manno-octulosonate from D-ribulose 5-phosphate: step 2/3. It functions in the pathway bacterial outer membrane biogenesis; lipopolysaccharide biosynthesis. The polypeptide is 2-dehydro-3-deoxyphosphooctonate aldolase (Nitrobacter hamburgensis (strain DSM 10229 / NCIMB 13809 / X14)).